A 168-amino-acid chain; its full sequence is G/U mismatch-specific DNA glycosylase (168 aa).

Belongs to the uracil-DNA glycosylase (UDG) superfamily. TDG/mug family. As to quaternary structure, binds DNA as a monomer.

It is found in the cytoplasm. It carries out the reaction Specifically hydrolyzes mismatched double-stranded DNA and polynucleotides, releasing free uracil.. Functionally, excises ethenocytosine and uracil, which can arise by alkylation or deamination of cytosine, respectively, from the corresponding mispairs with guanine in ds-DNA. It is capable of hydrolyzing the carbon-nitrogen bond between the sugar-phosphate backbone of the DNA and the mispaired base. The complementary strand guanine functions in substrate recognition. Required for DNA damage lesion repair in stationary-phase cells. The chain is G/U mismatch-specific DNA glycosylase from Escherichia coli O157:H7 (strain EC4115 / EHEC).